The following is a 329-amino-acid chain: Deoxynucleotidyltransferase terminal-interacting protein 1 (329 aa).

Disordered stretches follow at residues M1–E22 and K147–S178. An important for dimerization region spans residues M56 to K147. The segment covering K147–H158 has biased composition (basic and acidic residues). The a.T hook DNA-binding region spans R159–G173. Residue S161 is modified to Phosphoserine. A Nuclear localization signal motif is present at residues P164–R170. Positions R197 to T316 are important for DNA and nucleosome binding. A DNA-binding region (H-T-H motif) is located at residues G216 to P237.

Monomer and homodimer. A minor proportion may form homotrimers. Interacts with ZNF541. Interacts with the terminal deoxynucleotidyltransferase DNTT. Interacts with TRERF1. Identified in a histone deacetylase complex that contains DNTTIP1, HDAC1 and MIDEAS; this complex assembles into a tetramer that contains four copies of each protein chain. Component of a histone deacetylase complex containing DNTTIP1, ZNF541, HDAC1 and HDAC2. Identified in a complex with KCTD19, HDAC1, HDAC2 and ZNF541.

The protein localises to the nucleus. In terms of biological role, increases DNTT terminal deoxynucleotidyltransferase activity (in vitro). Also acts as a transcriptional regulator, binding to the consensus sequence 5'-GNTGCATG-3' following an AT-tract. Associates with RAB20 promoter and positively regulates its transcription. Binds DNA and nucleosomes; may recruit HDAC1 complexes to nucleosomes or naked DNA. The polypeptide is Deoxynucleotidyltransferase terminal-interacting protein 1 (DNTTIP1) (Pongo abelii (Sumatran orangutan)).